Reading from the N-terminus, the 149-residue chain is D-aminoacyl-tRNA deacylase (149 aa).

Residues 137 to 138 carry the Gly-cisPro motif, important for rejection of L-amino acids motif; that stretch reads GP.

It belongs to the DTD family. Homodimer.

The protein resides in the cytoplasm. The enzyme catalyses glycyl-tRNA(Ala) + H2O = tRNA(Ala) + glycine + H(+). It carries out the reaction a D-aminoacyl-tRNA + H2O = a tRNA + a D-alpha-amino acid + H(+). In terms of biological role, an aminoacyl-tRNA editing enzyme that deacylates mischarged D-aminoacyl-tRNAs. Also deacylates mischarged glycyl-tRNA(Ala), protecting cells against glycine mischarging by AlaRS. Acts via tRNA-based rather than protein-based catalysis; rejects L-amino acids rather than detecting D-amino acids in the active site. By recycling D-aminoacyl-tRNA to D-amino acids and free tRNA molecules, this enzyme counteracts the toxicity associated with the formation of D-aminoacyl-tRNA entities in vivo and helps enforce protein L-homochirality. The chain is D-aminoacyl-tRNA deacylase from Clostridium beijerinckii (strain ATCC 51743 / NCIMB 8052) (Clostridium acetobutylicum).